The following is a 284-amino-acid chain: Protoheme IX farnesyltransferase (284 aa).

The next 9 membrane-spanning stretches (helical) occupy residues 2 to 19 (SLVVFTALVGLLVAPVTV), 23 to 45 (IALTGILFIALGAGASGALNMWS), 69 to 89 (GEALGIGLALSGIAVVMLGLA), 92 to 112 (LFAAGLLAFTIFFYAVVYSMW), 121 to 141 (IVIGGAAGAFPPMIGWAVATG), 148 to 168 (LFMFALIFMWTPPHFWSLALF), 194 to 214 (VLVYSLLLAPLAVAGAFTGTG), 217 to 237 (LYLATALALNGWLLVGAVRTW), and 263 to 283 (LFLHFGAILAEAALKPYGLGG).

The protein belongs to the UbiA prenyltransferase family. Protoheme IX farnesyltransferase subfamily. As to quaternary structure, interacts with CtaA.

The protein localises to the cell inner membrane. It catalyses the reaction heme b + (2E,6E)-farnesyl diphosphate + H2O = Fe(II)-heme o + diphosphate. It functions in the pathway porphyrin-containing compound metabolism; heme O biosynthesis; heme O from protoheme: step 1/1. In terms of biological role, converts heme B (protoheme IX) to heme O by substitution of the vinyl group on carbon 2 of heme B porphyrin ring with a hydroxyethyl farnesyl side group. This is Protoheme IX farnesyltransferase from Cereibacter sphaeroides (Rhodobacter sphaeroides).